Here is a 310-residue protein sequence, read N- to C-terminus: tRNA uridine(34) hydroxylase (310 aa).

Residues 124–218 form the Rhodanese domain; that stretch reads SDPEVLLIDT…YFEEVPQEES (95 aa). Cys178 serves as the catalytic Cysteine persulfide intermediate.

The protein belongs to the TrhO family.

The catalysed reaction is uridine(34) in tRNA + AH2 + O2 = 5-hydroxyuridine(34) in tRNA + A + H2O. Its function is as follows. Catalyzes oxygen-dependent 5-hydroxyuridine (ho5U) modification at position 34 in tRNAs. The chain is tRNA uridine(34) hydroxylase from Pseudomonas putida (strain W619).